Consider the following 362-residue polypeptide: B3 domain-containing protein IDEF1 (362 aa).

The segment at 30–91 is disordered; the sequence is VPFPNPFPAP…TPTPTPRGFA (62 aa). A compositionally biased stretch (basic residues) spans 48–70; the sequence is PHNHNHNHNHNHNIHNSHNHNHN. The segment at residues 253-355 is a DNA-binding region (TF-B3); sequence LRKELTKSDV…KFIIRGEKAI (103 aa).

Post-translationally, polyubiquitinated. Ubiquitination leads to its subsequent degradation via the proteasome pathway. Expressed in roots.

Its subcellular location is the nucleus. Transcription regulator involved in iron deficiency response and tolerance. May regulate directly iron transporters or other transcription factors involved in iron-deficiency response. Binds specifically to the DNA sequence 5'-CATGC-3' of the IDE1 element found in the promoter of the barley iron deficiency-inducible gene IDS2. In Oryza sativa subsp. japonica (Rice), this protein is B3 domain-containing protein IDEF1 (IDEF1).